The primary structure comprises 335 residues: NADH-quinone oxidoreductase subunit H (335 aa).

8 helical membrane-spanning segments follow: residues 11-31 (VILT…CGAL), 81-101 (MIFT…FVVI), 114-134 (IGLL…LFAG), 154-174 (VSYE…VGSF), 187-207 (LWFI…GVAV), 238-258 (FFVG…TLFF), 270-290 (QVPF…FILL), and 307-327 (WKFC…VVLY).

The protein belongs to the complex I subunit 1 family. As to quaternary structure, NDH-1 is composed of 13 different subunits. Subunits NuoA, H, J, K, L, M, N constitute the membrane sector of the complex.

The protein resides in the cell inner membrane. It carries out the reaction a quinone + NADH + 5 H(+)(in) = a quinol + NAD(+) + 4 H(+)(out). Functionally, NDH-1 shuttles electrons from NADH, via FMN and iron-sulfur (Fe-S) centers, to quinones in the respiratory chain. The immediate electron acceptor for the enzyme in this species is believed to be ubiquinone. Couples the redox reaction to proton translocation (for every two electrons transferred, four hydrogen ions are translocated across the cytoplasmic membrane), and thus conserves the redox energy in a proton gradient. This subunit may bind ubiquinone. This chain is NADH-quinone oxidoreductase subunit H, found in Pseudomonas entomophila (strain L48).